A 199-amino-acid polypeptide reads, in one-letter code: dITP/XTP pyrophosphatase (199 aa).

8 to 13 provides a ligand contact to substrate; the sequence is SGNAGK. Asp69 serves as the catalytic Proton acceptor. Asp69 provides a ligand contact to Mg(2+). Substrate is bound by residues Ser70, 154-157, Lys177, and 182-183; these read FGYN and HR.

It belongs to the HAM1 NTPase family. Homodimer. Requires Mg(2+) as cofactor.

The catalysed reaction is XTP + H2O = XMP + diphosphate + H(+). It carries out the reaction dITP + H2O = dIMP + diphosphate + H(+). The enzyme catalyses ITP + H2O = IMP + diphosphate + H(+). Functionally, pyrophosphatase that catalyzes the hydrolysis of nucleoside triphosphates to their monophosphate derivatives, with a high preference for the non-canonical purine nucleotides XTP (xanthosine triphosphate), dITP (deoxyinosine triphosphate) and ITP. Seems to function as a house-cleaning enzyme that removes non-canonical purine nucleotides from the nucleotide pool, thus preventing their incorporation into DNA/RNA and avoiding chromosomal lesions. The polypeptide is dITP/XTP pyrophosphatase (Xanthomonas oryzae pv. oryzae (strain KACC10331 / KXO85)).